The chain runs to 458 residues: Argininosuccinate lyase (458 aa).

Belongs to the lyase 1 family. Argininosuccinate lyase subfamily.

It is found in the cytoplasm. It carries out the reaction 2-(N(omega)-L-arginino)succinate = fumarate + L-arginine. Its pathway is amino-acid biosynthesis; L-arginine biosynthesis; L-arginine from L-ornithine and carbamoyl phosphate: step 3/3. The protein is Argininosuccinate lyase of Neisseria gonorrhoeae (strain ATCC 700825 / FA 1090).